Consider the following 412-residue polypeptide: Multifunctional CCA protein (412 aa).

The ATP site is built by Gly8 and Arg11. The CTP site is built by Gly8 and Arg11. 2 residues coordinate Mg(2+): Asp21 and Asp23. 3 residues coordinate ATP: Arg91, Arg137, and Arg140. The CTP site is built by Arg91, Arg137, and Arg140. The HD domain occupies 228-329 (TGIHTMMVLE…VKLFDKADFW (102 aa)).

It belongs to the tRNA nucleotidyltransferase/poly(A) polymerase family. Bacterial CCA-adding enzyme type 1 subfamily. As to quaternary structure, monomer. Can also form homodimers and oligomers. Requires Mg(2+) as cofactor. Ni(2+) is required as a cofactor.

The catalysed reaction is a tRNA precursor + 2 CTP + ATP = a tRNA with a 3' CCA end + 3 diphosphate. It carries out the reaction a tRNA with a 3' CCA end + 2 CTP + ATP = a tRNA with a 3' CCACCA end + 3 diphosphate. Catalyzes the addition and repair of the essential 3'-terminal CCA sequence in tRNAs without using a nucleic acid template. Adds these three nucleotides in the order of C, C, and A to the tRNA nucleotide-73, using CTP and ATP as substrates and producing inorganic pyrophosphate. tRNA 3'-terminal CCA addition is required both for tRNA processing and repair. Also involved in tRNA surveillance by mediating tandem CCA addition to generate a CCACCA at the 3' terminus of unstable tRNAs. While stable tRNAs receive only 3'-terminal CCA, unstable tRNAs are marked with CCACCA and rapidly degraded. The polypeptide is Multifunctional CCA protein (Shewanella pealeana (strain ATCC 700345 / ANG-SQ1)).